Reading from the N-terminus, the 308-residue chain is Probable dimethyladenosine transferase (308 aa).

A compositionally biased stretch (basic residues) spans 1–11 (MGKTSKVKKTK). The interval 1–24 (MGKTSKVKKTKAGSSTGNVQSLPF) is disordered. Positions 12–24 (AGSSTGNVQSLPF) are enriched in polar residues. His-31, Leu-33, Gly-58, Glu-79, Asp-107, and Asn-122 together coordinate S-adenosyl-L-methionine.

This sequence belongs to the class I-like SAM-binding methyltransferase superfamily. rRNA adenine N(6)-methyltransferase family. Part of the small subunit (SSU) processome, composed of more than 70 proteins and the RNA chaperone small nucleolar RNA (snoRNA) U3.

Its subcellular location is the nucleus. The protein localises to the nucleolus. It carries out the reaction adenosine(1779)/adenosine(1780) in 18S rRNA + 4 S-adenosyl-L-methionine = N(6)-dimethyladenosine(1779)/N(6)-dimethyladenosine(1780) in 18S rRNA + 4 S-adenosyl-L-homocysteine + 4 H(+). Functionally, specifically dimethylates two adjacent adenosines in the loop of a conserved hairpin near the 3'-end of 18S rRNA in the 40S particle. Involved in the pre-rRNA processing steps leading to small-subunit rRNA production independently of its RNA-modifying catalytic activity. Part of the small subunit (SSU) processome, first precursor of the small eukaryotic ribosomal subunit. During the assembly of the SSU processome in the nucleolus, many ribosome biogenesis factors, an RNA chaperone and ribosomal proteins associate with the nascent pre-rRNA and work in concert to generate RNA folding, modifications, rearrangements and cleavage as well as targeted degradation of pre-ribosomal RNA by the RNA exosome. The sequence is that of Probable dimethyladenosine transferase from Caenorhabditis elegans.